Consider the following 211-residue polypeptide: Putative transposase for insertion sequence element IS402 (211 aa).

The tract at residues 51–71 (RRWGRPKTGPNPTDRARPGSK) is disordered.

Belongs to the transposase 11 family.

Involved in the transposition of the insertion sequence. This chain is Putative transposase for insertion sequence element IS402, found in Burkholderia cepacia (Pseudomonas cepacia).